Here is a 402-residue protein sequence, read N- to C-terminus: Multidrug resistance protein MdtH (402 aa).

Over 1–12 (MSRVSQARNLGK) the chain is Cytoplasmic. A helical transmembrane segment spans residues 13 to 33 (YFLLIDNMLVVLGFFVVFPLI). Residues 34 to 98 (SIRFVDQMGW…GFATMGIAHE (65 aa)) are Periplasmic-facing. The helical transmembrane segment at 99–116 (PWLLWFSCFLSGLGGTLF) threads the bilayer. Over 117-138 (DPPRSALVVKLIRPEQRDRFFS) the chain is Cytoplasmic. Residues 139 to 159 (LLMMQDSAGAVIGALLGSWLL) traverse the membrane as a helical segment. Residues 160–164 (QYDFR) are Periplasmic-facing. The chain crosses the membrane as a helical span at residues 165–185 (LVCATGAILFILCALFNAWLL). Residues 186–213 (PAWKLSTVRTPVREGMRRVMSDKRFVTY) are Cytoplasmic-facing. A helical membrane pass occupies residues 214–234 (VLTLAGYYMLAVQVMLMLPIM). Residues 235–243 (VNDIAGSPA) are Periplasmic-facing. Residues 244–264 (AVKWMYAIEACLSLTLLYPIA) traverse the membrane as a helical segment. The Cytoplasmic portion of the chain corresponds to 265 to 276 (RWSEKRFRLEHR). The chain crosses the membrane as a helical span at residues 277–297 (LMAGLLVMSLSMLPIGMVGNL). Topologically, residues 298 to 299 (QQ) are periplasmic. A helical membrane pass occupies residues 300–320 (LFTLICAFYIGSVIAEPARET). Residues 321-339 (LSASLADARARGSYMGFSR) are Cytoplasmic-facing. A helical membrane pass occupies residues 340–360 (LGLAIGGAIGYIGGGWLFDMG). The Periplasmic segment spans residues 361 to 367 (KALAQPE). A helical membrane pass occupies residues 368–388 (LPWMMLGIIGFITFLALGWQF). Residues 389–402 (SHKRTPRRMLEPGA) lie on the Cytoplasmic side of the membrane.

Belongs to the major facilitator superfamily. DHA1 family. MdtH (TC 2.A.1.2.21) subfamily.

The protein resides in the cell inner membrane. The protein is Multidrug resistance protein MdtH of Salmonella typhimurium (strain LT2 / SGSC1412 / ATCC 700720).